The chain runs to 84 residues: Small ribosomal subunit protein bS16 (84 aa).

The protein belongs to the bacterial ribosomal protein bS16 family.

In Koribacter versatilis (strain Ellin345), this protein is Small ribosomal subunit protein bS16.